The sequence spans 449 residues: N-succinylarginine dihydrolase (449 aa).

Residues glycine 19–serine 28, asparagine 110, and histidine 137–arginine 138 each bind substrate. Residues tyrosine 23–arginine 43 form a disordered region. The segment covering alanine 27–asparagine 37 has biased composition (low complexity). Glutamate 174 is a catalytic residue. Arginine 214 provides a ligand contact to substrate. Residue histidine 250 is part of the active site. Substrate contacts are provided by aspartate 252 and asparagine 365. Cysteine 371 functions as the Nucleophile in the catalytic mechanism.

Belongs to the succinylarginine dihydrolase family. Homodimer.

The catalysed reaction is N(2)-succinyl-L-arginine + 2 H2O + 2 H(+) = N(2)-succinyl-L-ornithine + 2 NH4(+) + CO2. Its pathway is amino-acid degradation; L-arginine degradation via AST pathway; L-glutamate and succinate from L-arginine: step 2/5. Catalyzes the hydrolysis of N(2)-succinylarginine into N(2)-succinylornithine, ammonia and CO(2). The chain is N-succinylarginine dihydrolase from Pseudomonas putida (strain ATCC 700007 / DSM 6899 / JCM 31910 / BCRC 17059 / LMG 24140 / F1).